A 493-amino-acid polypeptide reads, in one-letter code: MKRKLTGLFGAPVSDRENSMTAGPRGPLLMQDIYFLEQMAHFDREVIPERRMHAKGSGAFGTFTVTNDITKYTCASIFAEVGKQTEMFARFSTVAGERGAGDAERDIRGFALKFYTDEGNWDLVGNNTPVFFFRDPKLFPSLNHVVKRNPKTNMKDPQANWDFWTLLPEALHQITILMTDRGIPKGFRNMHGFGSHTYSMYNDKGERFWVKFHHRTQQGIENYSAEEAEQVMAKDRDSSQRDLFNNIEQGNFPKWKMYIQVMTEEQARNHKDNPFDLTKVWYKDEYPLIEVGEFELNRNPENYFQDVEQAAFAPTNIVPGLDFSPDKMLQGRLFSYGDTQRYRLGVNHWQIPVNQPKGVGMENICPFSRDGHMRILDNNQGASTHYYPNSNGAFEDQPQYKKPALDIQGQAYEYDFREDDDNYFEQPGKLFRLLSSEEQQILFNNTANEMSPVTDALKHRHIRHCYKADPAYGQGVAEAMGIDINEVDLDVAD.

The interval 1 to 24 (MKRKLTGLFGAPVSDRENSMTAGP) is disordered. Residues histidine 53 and asparagine 126 contribute to the active site. Tyrosine 336 is a binding site for heme.

This sequence belongs to the catalase family. Homodimer. It depends on heme as a cofactor.

The enzyme catalyses 2 H2O2 = O2 + 2 H2O. Functionally, decomposes hydrogen peroxide into water and oxygen; serves to protect cells from the toxic effects of hydrogen peroxide. The protein is Catalase A (katA) of Staphylococcus xylosus.